A 991-amino-acid chain; its full sequence is Translation initiation factor IF-2 (991 aa).

Disordered stretches follow at residues 53–85, 97–175, and 312–395; these read SHGT…KART, VKRD…EAAE, and GIKG…DRGG. Composition is skewed to basic and acidic residues over residues 97-113 and 125-175; these read VKRD…HDSQ and ELQR…EAAE. The segment covering 323–338 has biased composition (low complexity); the sequence is AAGAPAPGAAPGAAAK. The segment covering 339-349 has biased composition (basic and acidic residues); it reads PGEKKSVKSEK. Positions 491-658 constitute a tr-type G domain; the sequence is PRPPVVTVMG…QVLLQAEVLE (168 aa). The tract at residues 500-507 is G1; it reads GHVDHGKT. A GTP-binding site is contributed by 500-507; it reads GHVDHGKT. Residues 525–529 are G2; sequence GITQH. The G3 stretch occupies residues 546–549; the sequence is DTPG. GTP contacts are provided by residues 546–550 and 600–603; these read DTPGH and NKID. The interval 600–603 is G4; the sequence is NKID. The G5 stretch occupies residues 636 to 638; sequence SAK.

The protein belongs to the TRAFAC class translation factor GTPase superfamily. Classic translation factor GTPase family. IF-2 subfamily.

The protein resides in the cytoplasm. One of the essential components for the initiation of protein synthesis. Protects formylmethionyl-tRNA from spontaneous hydrolysis and promotes its binding to the 30S ribosomal subunits. Also involved in the hydrolysis of GTP during the formation of the 70S ribosomal complex. The polypeptide is Translation initiation factor IF-2 (Leptothrix cholodnii (strain ATCC 51168 / LMG 8142 / SP-6) (Leptothrix discophora (strain SP-6))).